Here is a 439-residue protein sequence, read N- to C-terminus: 23S rRNA (uracil(1939)-C(5))-methyltransferase RlmD (439 aa).

One can recognise a TRAM domain in the interval 10–69 (KTQLNTRHQAVQVERLDHHGAGIAYLKKKPLFIDGALPGEEVVTQLVEEKSKFARGKLIK). Residues Cys82, Cys88, Cys91, and Cys169 each coordinate [4Fe-4S] cluster. Residues Gln272, Phe301, Asn306, Glu322, Asn349, and Asp370 each contribute to the S-adenosyl-L-methionine site. Cys396 (nucleophile) is an active-site residue.

Belongs to the class I-like SAM-binding methyltransferase superfamily. RNA M5U methyltransferase family. RlmD subfamily.

The catalysed reaction is uridine(1939) in 23S rRNA + S-adenosyl-L-methionine = 5-methyluridine(1939) in 23S rRNA + S-adenosyl-L-homocysteine + H(+). Its function is as follows. Catalyzes the formation of 5-methyl-uridine at position 1939 (m5U1939) in 23S rRNA. This Vibrio campbellii (strain ATCC BAA-1116) protein is 23S rRNA (uracil(1939)-C(5))-methyltransferase RlmD.